The chain runs to 39 residues: U1-nemetoxin-Csp1c (39 aa).

4 cysteine pairs are disulfide-bonded: Cys-1–Cys-15, Cys-8–Cys-19, Cys-14–Cys-36, and Cys-25–Cys-32.

Expressed by the venom gland.

The protein localises to the secreted. Causes paralysis to insect larvae (H.virescens). This toxin is active only on insects. In Calisoga sp. (Spider), this protein is U1-nemetoxin-Csp1c.